Here is an 80-residue protein sequence, read N- to C-terminus: Translation initiation factor IF-1 (80 aa).

The region spanning 6–80 (RKQEHEKERG…LTRGRIVYRL (75 aa)) is the S1-like domain.

It belongs to the IF-1 family. As to quaternary structure, component of the 30S ribosomal translation pre-initiation complex which assembles on the 30S ribosome in the order IF-2 and IF-3, IF-1 and N-formylmethionyl-tRNA(fMet); mRNA recruitment can occur at any time during PIC assembly.

It localises to the cytoplasm. In terms of biological role, one of the essential components for the initiation of protein synthesis. Stabilizes the binding of IF-2 and IF-3 on the 30S subunit to which N-formylmethionyl-tRNA(fMet) subsequently binds. Helps modulate mRNA selection, yielding the 30S pre-initiation complex (PIC). Upon addition of the 50S ribosomal subunit IF-1, IF-2 and IF-3 are released leaving the mature 70S translation initiation complex. The polypeptide is Translation initiation factor IF-1 (Aquifex aeolicus (strain VF5)).